The following is a 320-amino-acid chain: Acetyl-coenzyme A carboxylase carboxyl transferase subunit alpha (320 aa).

The 254-residue stretch at isoleucine 42–aspartate 295 folds into the CoA carboxyltransferase C-terminal domain.

Belongs to the AccA family. In terms of assembly, acetyl-CoA carboxylase is a heterohexamer composed of biotin carboxyl carrier protein (AccB), biotin carboxylase (AccC) and two subunits each of ACCase subunit alpha (AccA) and ACCase subunit beta (AccD).

It is found in the cytoplasm. It catalyses the reaction N(6)-carboxybiotinyl-L-lysyl-[protein] + acetyl-CoA = N(6)-biotinyl-L-lysyl-[protein] + malonyl-CoA. It functions in the pathway lipid metabolism; malonyl-CoA biosynthesis; malonyl-CoA from acetyl-CoA: step 1/1. In terms of biological role, component of the acetyl coenzyme A carboxylase (ACC) complex. First, biotin carboxylase catalyzes the carboxylation of biotin on its carrier protein (BCCP) and then the CO(2) group is transferred by the carboxyltransferase to acetyl-CoA to form malonyl-CoA. The protein is Acetyl-coenzyme A carboxylase carboxyl transferase subunit alpha of Nitrobacter hamburgensis (strain DSM 10229 / NCIMB 13809 / X14).